The chain runs to 303 residues: Recombination-associated protein RdgC (303 aa).

This sequence belongs to the RdgC family.

It localises to the cytoplasm. The protein localises to the nucleoid. Functionally, may be involved in recombination. The polypeptide is Recombination-associated protein RdgC (Salmonella newport (strain SL254)).